Reading from the N-terminus, the 97-residue chain is Cornifin (97 aa).

Positions 1–42 (MSSQQQKQPCTPPPQPQQQQVKQPCQPPPQEPCVPKTKEPCH) are disordered. Serine 2 carries the N-acetylserine modification. 9 tandem repeats follow at residues 3–14 (SQQQKQPCTPPP), 18–29 (QQQVKQPCQPPP), 31–38 (EPCVPKTK), 39–46 (EPCHPKVP), 47–54 (EPCQPKVP), 55–62 (EPCQPKVP), 63–70 (EPCHPKVP), 71–78 (EPCQPKVP), and 79–85 (EPCPSPV). Residues 3–29 (SQQQKQPCTPPPQPQQQQVKQPCQPPP) form a 2 X 12 AA approximate repeats region. Residues 31–85 (EPCVPKTKEPCHPKVPEPCQPKVPEPCQPKVPEPCHPKVPEPCQPKVPEPCPSPV) are 7 X 8 AA approximate tandem repeats.

It belongs to the cornifin (SPRR) family. In terms of tissue distribution, not detected in normal lung tissue but seen in tumor tissues. Cells around the keratin pearls contain high levels.

Its subcellular location is the cytoplasm. Its function is as follows. Cross-linked envelope protein of keratinocytes. It is a keratinocyte protein that first appears in the cell cytosol, but ultimately becomes cross-linked to membrane proteins by transglutaminase. All that results in the formation of an insoluble envelope beneath the plasma membrane. The protein is Cornifin (SPRP) of Sus scrofa (Pig).